A 483-amino-acid chain; its full sequence is Regulatory protein ViaA (483 aa).

The protein belongs to the ViaA family. Homodimer. Interacts with RavA.

The protein localises to the cytoplasm. Functionally, component of the RavA-ViaA chaperone complex, which may act on the membrane to optimize the function of some of the respiratory chains. ViaA stimulates the ATPase activity of RavA. This Escherichia coli O127:H6 (strain E2348/69 / EPEC) protein is Regulatory protein ViaA.